The primary structure comprises 160 residues: Transcription elongation factor GreA (160 aa).

The stretch at 43–76 forms a coiled coil; the sequence is LSENAEYDAAREQQRQLENKIGDLESKLTRATIL.

It belongs to the GreA/GreB family.

Necessary for efficient RNA polymerase transcription elongation past template-encoded arresting sites. The arresting sites in DNA have the property of trapping a certain fraction of elongating RNA polymerases that pass through, resulting in locked ternary complexes. Cleavage of the nascent transcript by cleavage factors such as GreA or GreB allows the resumption of elongation from the new 3'terminus. GreA releases sequences of 2 to 3 nucleotides. This chain is Transcription elongation factor GreA, found in Chlorobium phaeobacteroides (strain BS1).